The chain runs to 535 residues: CTP synthase (535 aa).

The interval 1–267 (MTKFIFVTGG…DDIVIKRLDL (267 aa)) is amidoligase domain. Serine 13 is a CTP binding site. Serine 13 is a UTP binding site. 14–19 (SLGKGI) contributes to the ATP binding site. Tyrosine 54 is a binding site for L-glutamine. ATP is bound at residue aspartate 71. Mg(2+)-binding residues include aspartate 71 and glutamate 141. Residues 148 to 150 (DIE), 188 to 193 (KTKPTQ), and lysine 224 contribute to the CTP site. UTP is bound by residues 188–193 (KTKPTQ) and lysine 224. 240–242 (RDA) contributes to the ATP binding site. In terms of domain architecture, Glutamine amidotransferase type-1 spans 293–535 (TIGLVGKYVS…VEAAYKHQNK (243 aa)). Glycine 355 contributes to the L-glutamine binding site. The Nucleophile; for glutamine hydrolysis role is filled by cysteine 382. Residues 383–386 (LGMQ), glutamate 406, and arginine 463 contribute to the L-glutamine site. Catalysis depends on residues histidine 508 and glutamate 510.

This sequence belongs to the CTP synthase family. Homotetramer.

It catalyses the reaction UTP + L-glutamine + ATP + H2O = CTP + L-glutamate + ADP + phosphate + 2 H(+). The catalysed reaction is L-glutamine + H2O = L-glutamate + NH4(+). The enzyme catalyses UTP + NH4(+) + ATP = CTP + ADP + phosphate + 2 H(+). The protein operates within pyrimidine metabolism; CTP biosynthesis via de novo pathway; CTP from UDP: step 2/2. Allosterically activated by GTP, when glutamine is the substrate; GTP has no effect on the reaction when ammonia is the substrate. The allosteric effector GTP functions by stabilizing the protein conformation that binds the tetrahedral intermediate(s) formed during glutamine hydrolysis. Inhibited by the product CTP, via allosteric rather than competitive inhibition. Catalyzes the ATP-dependent amination of UTP to CTP with either L-glutamine or ammonia as the source of nitrogen. Regulates intracellular CTP levels through interactions with the four ribonucleotide triphosphates. This chain is CTP synthase, found in Staphylococcus haemolyticus (strain JCSC1435).